Here is a 578-residue protein sequence, read N- to C-terminus: CTP synthase (578 aa).

The region spanning 305–559 (KIALVGKYTN…LGLVAASSGI (255 aa)) is the Glutamine amidotransferase type-1 domain. Catalysis depends on for GATase activity residues C404, H535, and E537.

This sequence belongs to the CTP synthase family.

The catalysed reaction is UTP + L-glutamine + ATP + H2O = CTP + L-glutamate + ADP + phosphate + 2 H(+). Its pathway is pyrimidine metabolism; CTP biosynthesis via de novo pathway; CTP from UDP: step 2/2. Catalyzes the ATP-dependent amination of UTP to CTP with either L-glutamine or ammonia as the source of nitrogen. This chain is CTP synthase (URA7), found in Candida glabrata (strain ATCC 2001 / BCRC 20586 / JCM 3761 / NBRC 0622 / NRRL Y-65 / CBS 138) (Yeast).